A 217-amino-acid chain; its full sequence is tRNA (guanine-N(7)-)-methyltransferase (217 aa).

E44, E69, D96, and D118 together coordinate S-adenosyl-L-methionine. D118 is an active-site residue. Residues K122, D154, and T191–E194 contribute to the substrate site.

Belongs to the class I-like SAM-binding methyltransferase superfamily. TrmB family.

It carries out the reaction guanosine(46) in tRNA + S-adenosyl-L-methionine = N(7)-methylguanosine(46) in tRNA + S-adenosyl-L-homocysteine. It functions in the pathway tRNA modification; N(7)-methylguanine-tRNA biosynthesis. Functionally, catalyzes the formation of N(7)-methylguanine at position 46 (m7G46) in tRNA. The sequence is that of tRNA (guanine-N(7)-)-methyltransferase from Bacillus cereus (strain B4264).